We begin with the raw amino-acid sequence, 194 residues long: Amidophosphoribosyltransferase (194 aa).

Residues 1–11 (MPHEPKGLNEE) constitute a propeptide that is removed on maturation. C12 functions as the Nucleophile in the catalytic mechanism. Positions 12-194 (CGVFGVWGNP…PHGFRPMVVG (183 aa)) constitute a Glutamine amidotransferase type-2 domain.

It in the C-terminal section; belongs to the purine/pyrimidine phosphoribosyltransferase family.

It catalyses the reaction 5-phospho-beta-D-ribosylamine + L-glutamate + diphosphate = 5-phospho-alpha-D-ribose 1-diphosphate + L-glutamine + H2O. Its pathway is purine metabolism; IMP biosynthesis via de novo pathway; N(1)-(5-phospho-D-ribosyl)glycinamide from 5-phospho-alpha-D-ribose 1-diphosphate: step 1/2. In terms of biological role, catalyzes the formation of phosphoribosylamine from phosphoribosylpyrophosphate (PRPP) and glutamine. This Lacticaseibacillus casei (Lactobacillus casei) protein is Amidophosphoribosyltransferase.